Consider the following 431-residue polypeptide: Enolase (431 aa).

Position 163 (Gln163) interacts with (2R)-2-phosphoglycerate. Glu205 acts as the Proton donor in catalysis. Residues Asp242, Glu288, and Asp315 each coordinate Mg(2+). (2R)-2-phosphoglycerate-binding residues include Lys340, Arg369, Ser370, and Lys391. The active-site Proton acceptor is Lys340.

Belongs to the enolase family. Mg(2+) is required as a cofactor.

The protein resides in the cytoplasm. The protein localises to the secreted. It localises to the cell surface. The enzyme catalyses (2R)-2-phosphoglycerate = phosphoenolpyruvate + H2O. It participates in carbohydrate degradation; glycolysis; pyruvate from D-glyceraldehyde 3-phosphate: step 4/5. Functionally, catalyzes the reversible conversion of 2-phosphoglycerate (2-PG) into phosphoenolpyruvate (PEP). It is essential for the degradation of carbohydrates via glycolysis. The polypeptide is Enolase (Latilactobacillus sakei subsp. sakei (strain 23K) (Lactobacillus sakei subsp. sakei)).